The primary structure comprises 556 residues: Formate--tetrahydrofolate ligase (556 aa).

65–72 (TAAGEGKS) is a binding site for ATP.

This sequence belongs to the formate--tetrahydrofolate ligase family.

The catalysed reaction is (6S)-5,6,7,8-tetrahydrofolate + formate + ATP = (6R)-10-formyltetrahydrofolate + ADP + phosphate. It participates in one-carbon metabolism; tetrahydrofolate interconversion. The protein is Formate--tetrahydrofolate ligase of Elusimicrobium minutum (strain Pei191).